Reading from the N-terminus, the 274-residue chain is Diaminopimelate epimerase (274 aa).

Substrate is bound by residues Asn11, Gln44, and Asn64. Cys73 functions as the Proton donor in the catalytic mechanism. Substrate contacts are provided by residues 74 to 75 (GN), Asn157, Asn190, and 208 to 209 (ER). Cys217 serves as the catalytic Proton acceptor. 218 to 219 (GS) contacts substrate.

Belongs to the diaminopimelate epimerase family. Homodimer.

The protein resides in the cytoplasm. The catalysed reaction is (2S,6S)-2,6-diaminopimelate = meso-2,6-diaminopimelate. It participates in amino-acid biosynthesis; L-lysine biosynthesis via DAP pathway; DL-2,6-diaminopimelate from LL-2,6-diaminopimelate: step 1/1. Functionally, catalyzes the stereoinversion of LL-2,6-diaminopimelate (L,L-DAP) to meso-diaminopimelate (meso-DAP), a precursor of L-lysine and an essential component of the bacterial peptidoglycan. This chain is Diaminopimelate epimerase, found in Photorhabdus laumondii subsp. laumondii (strain DSM 15139 / CIP 105565 / TT01) (Photorhabdus luminescens subsp. laumondii).